The sequence spans 307 residues: GTPase Era (307 aa).

The Era-type G domain maps to 17 to 186; it reads RCGFVAIVGR…LELIKPYLPE (170 aa). The segment at 25–32 is G1; that stretch reads GRPNVGKS. 25 to 32 is a binding site for GTP; it reads GRPNVGKS. The interval 51-55 is G2; sequence QTTRN. A G3 region spans residues 72 to 75; sequence DTPG. GTP contacts are provided by residues 72 to 76 and 133 to 136; these read DTPGF and NKID. The G4 stretch occupies residues 133–136; sequence NKID. The interval 165–167 is G5; that stretch reads VSA. One can recognise a KH type-2 domain in the interval 217–293; the sequence is LGEELPYAMN…FLKVWVKVKS (77 aa).

Belongs to the TRAFAC class TrmE-Era-EngA-EngB-Septin-like GTPase superfamily. Era GTPase family. Monomer.

It localises to the cytoplasm. It is found in the cell inner membrane. In terms of biological role, an essential GTPase that binds both GDP and GTP, with rapid nucleotide exchange. Plays a role in 16S rRNA processing and 30S ribosomal subunit biogenesis and possibly also in cell cycle regulation and energy metabolism. This is GTPase Era from Neisseria meningitidis serogroup B (strain ATCC BAA-335 / MC58).